A 296-amino-acid chain; its full sequence is CRISPR-associated endonuclease Cas1 2 (296 aa).

Residues Glu-157, His-224, and Asp-237 each contribute to the Mn(2+) site.

The protein belongs to the CRISPR-associated endonuclease Cas1 family. In terms of assembly, homodimer, forms a heterotetramer with a Cas2 homodimer. Requires Mg(2+) as cofactor. It depends on Mn(2+) as a cofactor.

Its function is as follows. CRISPR (clustered regularly interspaced short palindromic repeat), is an adaptive immune system that provides protection against mobile genetic elements (viruses, transposable elements and conjugative plasmids). CRISPR clusters contain spacers, sequences complementary to antecedent mobile elements, and target invading nucleic acids. CRISPR clusters are transcribed and processed into CRISPR RNA (crRNA). Acts as a dsDNA endonuclease. Involved in the integration of spacer DNA into the CRISPR cassette. The sequence is that of CRISPR-associated endonuclease Cas1 2 from Chlorobaculum tepidum (strain ATCC 49652 / DSM 12025 / NBRC 103806 / TLS) (Chlorobium tepidum).